A 296-amino-acid polypeptide reads, in one-letter code: Large ribosomal subunit protein uL15m (296 aa).

Residues 1 to 20 constitute a mitochondrion transit peptide; that stretch reads MSLIKKPGGKTIEVVKNLPR. Residues 25 to 59 form a disordered region; the sequence is NLRPNPGAKTLEKRRGRGMHGGNRSGWGHKGERQR.

It belongs to the universal ribosomal protein uL15 family. Component of the mitochondrial ribosome large subunit (39S) which comprises a 16S rRNA and about 50 distinct proteins.

The protein resides in the mitochondrion. The polypeptide is Large ribosomal subunit protein uL15m (mrpl15) (Danio rerio (Zebrafish)).